We begin with the raw amino-acid sequence, 620 residues long: Arginine--tRNA ligase (620 aa).

Residues 147-157 (ANPTGPIHIGG) carry the 'HIGH' region motif.

Belongs to the class-I aminoacyl-tRNA synthetase family. As to quaternary structure, monomer.

The protein resides in the cytoplasm. It carries out the reaction tRNA(Arg) + L-arginine + ATP = L-arginyl-tRNA(Arg) + AMP + diphosphate. The polypeptide is Arginine--tRNA ligase (Bifidobacterium longum subsp. infantis (strain ATCC 15697 / DSM 20088 / JCM 1222 / NCTC 11817 / S12)).